We begin with the raw amino-acid sequence, 301 residues long: uncharacterized protein (301 aa).

It belongs to the asfivirus E301R family. In terms of assembly, interacts with host IRF3.

In terms of biological role, plays a role in the inhibition of host innate immune system by acting as a negatively regulator of type I interferon production. Mechanistically, interacts with and prevents host IRF3 nuclear localization to inhibit its transcriptional activity. This is an uncharacterized protein from African swine fever virus (isolate Pig/Kenya/KEN-50/1950) (ASFV).